Here is a 489-residue protein sequence, read N- to C-terminus: Betaine aldehyde dehydrogenase (489 aa).

T26 and D93 together coordinate K(+). NAD(+) is bound at residue 150-152 (GAW). The active-site Charge relay system is the K162. 176-179 (KPSE) is an NAD(+) binding site. V180 contacts K(+). 229 to 232 (GVET) contacts NAD(+). L245 contributes to the K(+) binding site. The active-site Proton acceptor is the E251. NAD(+) is bound by residues G253, C285, and E386. The Nucleophile role is filled by C285. At C285 the chain carries Cysteine sulfenic acid (-SOH). K(+)-binding residues include K456 and G459. E463 acts as the Charge relay system in catalysis.

This sequence belongs to the aldehyde dehydrogenase family. Dimer of dimers. Requires K(+) as cofactor.

It catalyses the reaction betaine aldehyde + NAD(+) + H2O = glycine betaine + NADH + 2 H(+). Its pathway is amine and polyamine biosynthesis; betaine biosynthesis via choline pathway; betaine from betaine aldehyde: step 1/1. Involved in the biosynthesis of the osmoprotectant glycine betaine. Catalyzes the irreversible oxidation of betaine aldehyde to the corresponding acid. The sequence is that of Betaine aldehyde dehydrogenase from Burkholderia pseudomallei (strain 1106a).